The chain runs to 850 residues: Protein SEY1 (850 aa).

Positions 1–27 (MSDLPPPDLGSEEISVSPTSSSSSFVP) are disordered. Residues 1-741 (MSDLPPPDLG…KRALIQHVTH (741 aa)) are Cytoplasmic-facing. Low complexity predominate over residues 12–27 (EEISVSPTSSSSSFVP). The 234-residue stretch at 64-297 (NNNYHIVSVF…NEDFLFKKYY (234 aa)) folds into the GB1/RHD3-type G domain. 74 to 81 (GSQSTGKS) contributes to the GTP binding site. A helical membrane pass occupies residues 742 to 762 (IPYYIYIVILVLGWNEFMAVL). Topologically, residues 763 to 765 (RNP) are lumenal. Residues 766 to 786 (FFFTLLLMLGAGTYVLYHLNL) form a helical membrane-spanning segment. Residues 787–850 (LKPAMVVVQR…SDLTPPGEGS (64 aa)) are Cytoplasmic-facing. Residues 816-850 (QPQEHAKRLSKMAGITEDKPEEIEMSDLTPPGEGS) form a disordered region.

Belongs to the TRAFAC class dynamin-like GTPase superfamily. GB1/RHD3 GTPase family. RHD3 subfamily.

The protein localises to the endoplasmic reticulum membrane. Its function is as follows. Cooperates with the reticulon proteins and tubule-shaping DP1 family proteins to generate and maintain the structure of the tubular endoplasmic reticulum network. Has GTPase activity, which is required for its function in ER organization. The polypeptide is Protein SEY1 (Meyerozyma guilliermondii (strain ATCC 6260 / CBS 566 / DSM 6381 / JCM 1539 / NBRC 10279 / NRRL Y-324) (Yeast)).